Here is a 131-residue protein sequence, read N- to C-terminus: U-scoloptoxin-Er5e (131 aa).

Residues 1-22 (MKTNCEFPLLCLLIVLVANVEG) form the signal peptide. Positions 23–94 (EVEDNELKMV…KRLWRNWERR (72 aa)) are excised as a propeptide. RLWRNWE repeat units follow at residues 34–40 (RLWRNWE), 61–67 (RLWRNWE), and 86–92 (RLWRNWE). Position 95 is a pyrrolidone carboxylic acid (Gln95). The stretch at 107-113 (ELWRNWE) is one RLWRNWE 4; approximate repeat. Positions 112 to 131 (WEDLKRRQVVDLNDEQKTTG) are excised as a propeptide.

This sequence belongs to the scoloptoxin-08 family. Expressed by the venom gland.

It is found in the secreted. This chain is U-scoloptoxin-Er5e, found in Ethmostigmus rubripes (Giant centipede).